Here is a 72-residue protein sequence, read N- to C-terminus: Long neurotoxin OH-5 (72 aa).

Cystine bridges form between C3–C22, C15–C43, C28–C32, C47–C58, and C59–C64.

The protein belongs to the three-finger toxin family. Long-chain subfamily. Type II alpha-neurotoxin sub-subfamily. As to expression, expressed by the venom gland.

The protein resides in the secreted. In terms of biological role, binds with high affinity to muscular (alpha-1/CHRNA1) and neuronal (alpha-7/CHRNA7) nicotinic acetylcholine receptor (nAChR) and inhibits acetylcholine from binding to the receptor, thereby impairing neuromuscular and neuronal transmission. This is Long neurotoxin OH-5 from Ophiophagus hannah (King cobra).